A 215-amino-acid chain; its full sequence is Putative serine/threonine-protein kinase YrzF (215 aa).

The 189-residue stretch at 27–215 (SEELTLIGKG…HFAQRKRKYS (189 aa)) folds into the Protein kinase domain. ATP contacts are provided by residues 33–41 (IGKGRSAYV) and Lys-54. Asp-135 functions as the Proton acceptor in the catalytic mechanism.

This sequence belongs to the protein kinase superfamily. Ser/Thr protein kinase family.

It carries out the reaction L-seryl-[protein] + ATP = O-phospho-L-seryl-[protein] + ADP + H(+). The catalysed reaction is L-threonyl-[protein] + ATP = O-phospho-L-threonyl-[protein] + ADP + H(+). This chain is Putative serine/threonine-protein kinase YrzF (yrzF), found in Bacillus subtilis (strain 168).